The sequence spans 108 residues: NADH dehydrogenase [ubiquinone] flavoprotein 3, mitochondrial (108 aa).

Residues 1–34 (MAAPCLLRQGRAGALKTMLQEAQVFRGLASTVSL) constitute a mitochondrion transit peptide. The interval 33-72 (SLSAESGKSEKGQPQNSKKQSPPKKPAPVPAEPFDNTTYK) is disordered. Ser105 is modified (phosphoserine).

This sequence belongs to the complex I NDUFV3 subunit family. Complex I is composed of 45 different subunits. This is a component of the flavoprotein-sulfur (FP) fragment of the enzyme.

Its subcellular location is the mitochondrion inner membrane. Accessory subunit of the mitochondrial membrane respiratory chain NADH dehydrogenase (Complex I), that is believed not to be involved in catalysis. Complex I functions in the transfer of electrons from NADH to the respiratory chain. The immediate electron acceptor for the enzyme is believed to be ubiquinone. May be the terminally assembled subunit of Complex I. This chain is NADH dehydrogenase [ubiquinone] flavoprotein 3, mitochondrial (NDUFV3), found in Homo sapiens (Human).